The sequence spans 146 residues: Cyanate hydratase (146 aa).

Catalysis depends on residues R87, E90, and S113.

Belongs to the cyanase family.

The enzyme catalyses cyanate + hydrogencarbonate + 3 H(+) = NH4(+) + 2 CO2. In terms of biological role, catalyzes the reaction of cyanate with bicarbonate to produce ammonia and carbon dioxide. The chain is Cyanate hydratase from Synechococcus elongatus (strain ATCC 33912 / PCC 7942 / FACHB-805) (Anacystis nidulans R2).